A 1304-amino-acid polypeptide reads, in one-letter code: Myosin-1 (1304 aa).

Residues 1-12 show a composition bias toward basic residues; that stretch reads MAIVKRGVRTKN. The tract at residues 1–24 is disordered; it reads MAIVKRGVRTKNKQSQQPSKSGIK. The region spanning 36-730 is the Myosin motor domain; it reads VGVSDLTLLS…TLFALEDMRD (695 aa). 129-136 contributes to the ATP binding site; that stretch reads GESGAGKT. A Phosphoserine modification is found at serine 364. The tract at residues 413-496 is actin-binding; that stretch reads SIGILDIYGF…PGLFAALNDS (84 aa). 2 consecutive IQ domains span residues 734–754 and 755–780; these read HNMA…KDDA and ARLI…YGNG. A TH1 domain is found at 788–978; it reads RRRMSMLGSR…TVTVRQGLPG (191 aa). Disordered regions lie at residues 963–1162 and 1214–1304; these read DSYK…TYKA and ECDP…DDDW. Polar residues-rich tracts occupy residues 964–983 and 1001–1012; these read SYKS…SQNP and RGSNMRSTSSYQ. Low complexity-rich tracts occupy residues 1029 to 1052, 1072 to 1096, and 1120 to 1140; these read QPPV…PQAQ, QPHA…PQAQ, and PSAP…KKNV. The segment covering 1141–1156 has biased composition (pro residues); it reads APPPPPAAASPPPKPK. The SH3 domain maps to 1155–1217; sequence PKFPTYKAAY…PAAYVVECDP (63 aa). Composition is skewed to low complexity over residues 1217–1227 and 1236–1256; these read PPANSPAGNAK and LNSA…NGAG. The span at 1292 to 1304 shows a compositional bias: acidic residues; it reads DSDEEDEEDDDDW.

This sequence belongs to the TRAFAC class myosin-kinesin ATPase superfamily. Myosin family. In terms of processing, phosphorylation of the TEDS site (Ser-364) is required for the polarization of the actin cytoskeleton. Phosphorylation probably activates the myosin-I ATPase activity.

It localises to the cytoplasm. Its subcellular location is the cytoskeleton. It is found in the actin patch. Its function is as follows. Type-I myosin implicated in the organization of the actin cytoskeleton. Required for proper actin cytoskeleton polarization. At the cell cortex, assembles in patch-like structures together with proteins from the actin-polymerizing machinery and promotes actin assembly. Functions as actin nucleation-promoting factor (NPF) for the Arp2/3 complex. The protein is Myosin-1 (MYO1) of Debaryomyces hansenii (strain ATCC 36239 / CBS 767 / BCRC 21394 / JCM 1990 / NBRC 0083 / IGC 2968) (Yeast).